Reading from the N-terminus, the 152-residue chain is UPF0266 membrane protein YobD (152 aa).

Transmembrane regions (helical) follow at residues 6–26 (LVLILFIAALLAYALYDQFIM), 45–65 (VDSVIFVGLVAILIYNNVTSH), and 67–87 (AQMTTWLLSALALMGFYIFWI).

This sequence belongs to the UPF0266 family.

It localises to the cell inner membrane. The polypeptide is UPF0266 membrane protein YobD (Salmonella newport (strain SL254)).